Here is a 147-residue protein sequence, read N- to C-terminus: Microtubule-associated protein 1 light chain 3 gamma (147 aa).

A phosphoserine; by TBK1 mark is found at serine 93 and serine 96. Residue glycine 126 is the site of Phosphatidylethanolamine amidated glycine; alternate attachment. Glycine 126 carries the Phosphatidylserine amidated glycine; alternate lipid modification. Positions 127 to 147 (CLESAAPRDGSSLEDRPCNPL) are cleaved as a propeptide — removed in mature form.

Belongs to the ATG8 family. In terms of assembly, 3 different light chains, LC1 (a cleavage product of MAP1B), LC2 (a cleavage product of MAP1A) and LC3 (produced by one of the MAP1LC3 genes), can associate with the MAP1A or MAP1B heavy chains. Interacts with TP53INP1 and TP53INP2. Interacts with CALCOCO2. Interacts with TECPR2. Interacts with TBC1D5. Found in a complex with UBQLN1 and UBQLN2. Interacts with UBQLN4 (via STI1 1 and 2 domains). Interacts with UBQLN1 in the presence of UBQLN4. Interacts with TRIM5. Interacts with ATG13. Interacts with MEFV and TRIM21. Interacts with WDR81; recruits MAP1LC3C to ubiquitinated protein aggregates in the aggrephagy process. Interacts with MOAP1 (via LIR motif). Interacts with reticulophagy regulators RETREG1, RETREG2 and RETREG3. Interacts with TAX1BP1. Interacts with IRGM. Interacts with SPART. Post-translationally, the precursor molecule is cleaved by ATG4 (ATG4A, ATG4B, ATG4C or ATG4D) to expose the glycine at the C-terminus and form the cytosolic form, LC3-I. The processed form is then activated by APG7L/ATG7, transferred to ATG3 and conjugated to phosphatidylethanolamine (PE) phospholipid to form the membrane-bound form, LC3-II. During non-canonical autophagy, the processed form is conjugated to phosphatidylserine (PS) phospholipid. ATG4 proteins also mediate the delipidation of PE-conjugated forms. In addition, ATG4B and ATG4D mediate delipidation of ATG8 proteins conjugated to PS during non-canonical autophagy. In terms of processing, (Microbial infection) The Legionella effector RavZ is a deconjugating enzyme that hydrolyzes the amide bond between the C-terminal glycine residue and an adjacent aromatic residue in ATG8 proteins conjugated to phosphatidylethanolamine (PE), producing an ATG8 protein that is resistant to reconjugation by the host machinery due to the cleavage of the reactive C-terminal glycine. RavZ is also able to mediate delipidation of ATG8 proteins conjugated to phosphatidylserine (PS). Phosphorylation at Ser-96 and Ser-98 by TBK1 prevents interaction with ATG4 (ATG4A, ATG4B, ATG4C or ATG4D). Phosphorylation by TBK1 on autophagosomes prevents their delipidation by ATG4 and premature removal from nascent autophagosomes. In terms of tissue distribution, most abundant in placenta, lung and ovary.

The protein resides in the cytoplasmic vesicle. Its subcellular location is the autophagosome membrane. The protein localises to the endomembrane system. It localises to the cytoplasm. It is found in the cytoskeleton. Its function is as follows. Ubiquitin-like modifier that plays a crucial role in antibacterial autophagy (xenophagy) through the selective binding of CALCOCO2. Recruits all ATG8 family members to infecting bacteria such as S.typhimurium. May also play a role in aggrephagy, the macroautophagic degradation of ubiquitinated and aggregated proteins. This Homo sapiens (Human) protein is Microtubule-associated protein 1 light chain 3 gamma (MAP1LC3C).